A 377-amino-acid chain; its full sequence is Mitogen-activated protein kinase pmk-1 (377 aa).

One can recognise a Protein kinase domain in the interval 35–319 (YINLTPIGTG…AKEAMEHEYL (285 aa)). Residues 41-49 (IGTGAYGTV) and lysine 64 each bind ATP. Aspartate 179 functions as the Proton acceptor in the catalytic mechanism. Threonine 191 is subject to Phosphothreonine. The short motif at 191–193 (TGY) is the TXY element. Position 193 is a phosphotyrosine (tyrosine 193).

It belongs to the protein kinase superfamily. CMGC Ser/Thr protein kinase family. MAP kinase subfamily. As to quaternary structure, interacts with transcription factor atf-7; perhaps in a manner dependent on dual specificity protein kinase sek-1. Requires Mg(2+) as cofactor. The cofactor is Mn(2+). In terms of processing, dually phosphorylated on Thr-191 and Tyr-193, probably by sek-1, which activates the enzyme. Increased phosphorylation in response to the heavy metal arsenite. Increased phosphorylation in response to intestinal colonization by probiotic Lactobacillus fermentum strain JDFM216. Expressed in intestinal cells.

It localises to the nucleus. The catalysed reaction is L-seryl-[protein] + ATP = O-phospho-L-seryl-[protein] + ADP + H(+). The enzyme catalyses L-threonyl-[protein] + ATP = O-phospho-L-threonyl-[protein] + ADP + H(+). Its activity is regulated as follows. Activated by phosphorylation on threonine and tyrosine. Inhibited by pyridinyl-imidazole related compounds. Functionally, serine/threonine kinase which responds to activation by environmental stress and pro-inflammatory cytokines by phosphorylating downstream targets. As part of a MAP kinase signaling pathway, plays a role in modulation of lifespan and immunity. Phosphorylates skn-1 which probably regulates skn-1 nuclear translocation in response to oxidative stress. Probably by activating skn-1, involved in the up-regulation of gcs-1 and glutathione-S-transferase gst-4 expression upon bacteria infection. Up-regulates expression of gcs-1 in intestinal cells upon arsenite treatment. Functions downstream of the MAPKK sek-1 and the MAPKKK nsy-1 as the MAP kinase which regulates pathogen resistance and responses to oxidative stress. Required for expression of antimicrobial peptide nlp-29 in response to fungal infection or physical injury. Involved in resistance to the nematotoxic C.cinerea galectin (Cgl2). May play a redundant role with other MAP kinases in susceptibility to anoxia, downstream of tir-1/nsy-1. Phosphorylates transcription factor rnt-1 during oxidative stress which results in rnt-1 stabilization in the intestine. Phosphorylates transcription factor atf-7 during pathogen infection resulting in modulation of target genes. Probably downstream of nsy-1 and sek-1, involved in germline apoptosis induced by heavy metals, such as Cu(2+). Regulates the basal expression of immune effector genes including irg-4, irg-5, mul-1 and drd-50. In Caenorhabditis elegans, this protein is Mitogen-activated protein kinase pmk-1.